The sequence spans 701 residues: Polyribonucleotide nucleotidyltransferase (701 aa).

Mg(2+) is bound by residues aspartate 487 and aspartate 493. A KH domain is found at 554–613 (PTMLQMKIDSDKIRDVIGKGGATIRGICEETKASIDIEDDGSVKIYGETKEAAEAAKLRV). Residues 623 to 691 (GKIYVGKVER…NRGRIKLSIK (69 aa)) form the S1 motif domain.

Belongs to the polyribonucleotide nucleotidyltransferase family. In terms of assembly, component of the RNA degradosome, which is a multiprotein complex involved in RNA processing and mRNA degradation. It depends on Mg(2+) as a cofactor.

It localises to the cytoplasm. The catalysed reaction is RNA(n+1) + phosphate = RNA(n) + a ribonucleoside 5'-diphosphate. In terms of biological role, involved in mRNA degradation. Catalyzes the phosphorolysis of single-stranded polyribonucleotides processively in the 3'- to 5'-direction. The polypeptide is Polyribonucleotide nucleotidyltransferase (Pseudomonas aeruginosa (strain LESB58)).